The chain runs to 469 residues: Tetratricopeptide repeat protein 38 (469 aa).

Alanine 2 carries the post-translational modification N-acetylalanine. Residue serine 5 is modified to Phosphoserine. TPR repeat units lie at residues 108 to 141 (REQLHVSAVETFAKGNFPKACELWEQILQDHPTD), 180 to 213 (SYVKGIYSFGLMETNFYDQAEKLAKEALSINPTD), and 252 to 285 (CHNYWHWALYLIEKGEYEAALTIYDTHILPSLQA).

Belongs to the TTC38 family.

This chain is Tetratricopeptide repeat protein 38 (TTC38), found in Pongo abelii (Sumatran orangutan).